The following is a 168-amino-acid chain: uncharacterized protein (168 aa).

This is an uncharacterized protein from Saccharomyces cerevisiae (strain ATCC 204508 / S288c) (Baker's yeast).